A 227-amino-acid polypeptide reads, in one-letter code: Translation initiation factor 6 (227 aa).

It belongs to the eIF-6 family.

Binds to the 50S ribosomal subunit and prevents its association with the 30S ribosomal subunit to form the 70S initiation complex. This chain is Translation initiation factor 6, found in Methanococcus vannielii (strain ATCC 35089 / DSM 1224 / JCM 13029 / OCM 148 / SB).